The chain runs to 491 residues: Glutamyl-tRNA(Gln) amidotransferase subunit A (491 aa).

Residues Lys79 and Ser158 each act as charge relay system in the active site. Ser182 acts as the Acyl-ester intermediate in catalysis.

It belongs to the amidase family. GatA subfamily. Heterotrimer of A, B and C subunits.

It catalyses the reaction L-glutamyl-tRNA(Gln) + L-glutamine + ATP + H2O = L-glutaminyl-tRNA(Gln) + L-glutamate + ADP + phosphate + H(+). In terms of biological role, allows the formation of correctly charged Gln-tRNA(Gln) through the transamidation of misacylated Glu-tRNA(Gln) in organisms which lack glutaminyl-tRNA synthetase. The reaction takes place in the presence of glutamine and ATP through an activated gamma-phospho-Glu-tRNA(Gln). The polypeptide is Glutamyl-tRNA(Gln) amidotransferase subunit A (Maricaulis maris (strain MCS10) (Caulobacter maris)).